A 492-amino-acid chain; its full sequence is Gamma-aminobutyric acid receptor subunit alpha-3 (492 aa).

Residues 1–28 (MIITQTSHCYMTSLGILFLINILPGTTG) form the signal peptide. Positions 28 to 54 (GQGESRRQEPGDFVKQDIGGLSPKHAP) are disordered. Residues 29-274 (QGESRRQEPG…MTTHFHLKRK (246 aa)) are Extracellular-facing. A compositionally biased stretch (basic and acidic residues) spans 31 to 42 (ESRRQEPGDFVK). N-linked (GlcNAc...) asparagine glycosylation occurs at N63. R119 lines the 4-aminobutanoate pocket. Residues N163 and N176 are each glycosylated (N-linked (GlcNAc...) asparagine). T182 lines the 4-aminobutanoate pocket. Residues C191 and C205 are joined by a disulfide bond. An N-linked (GlcNAc...) asparagine glycan is attached at N228. Residues 275-295 (IGYFVIQTYLPCIMTVILSQV) traverse the membrane as a helical segment. Residues 296–305 (SFWLNRESVP) are Cytoplasmic-facing. A helical transmembrane segment spans residues 306 to 325 (ARTVFGVTTVLTMTTLSISA). The Extracellular portion of the chain corresponds to 326-336 (RNSLPKVAYAT). The chain crosses the membrane as a helical span at residues 337–357 (AMDWFIAVCYAFVFSALIEFA). At 358–457 (TVNYFTKRSW…TYNSVSKVDK (100 aa)) the chain is on the cytoplasmic side. The residue at position 426 (S426) is a Phosphoserine. Residue T427 is modified to Phosphothreonine. A phosphoserine mark is found at S433 and S442. The chain crosses the membrane as a helical span at residues 458–478 (ISRIIFPVLFAIFNLVYWATY). Residues 479–492 (VNRESAIKGMIRKQ) are Extracellular-facing.

The protein belongs to the ligand-gated ion channel (TC 1.A.9) family. Gamma-aminobutyric acid receptor (TC 1.A.9.5) subfamily. GABRA3 sub-subfamily. As to quaternary structure, heteropentamer, formed by a combination of alpha (GABRA1-6), beta (GABRB1-3), gamma (GABRG1-3), delta (GABRD), epsilon (GABRE), rho (GABRR1-3), pi (GABRP) and theta (GABRQ) chains, each subunit exhibiting distinct physiological and pharmacological properties. Binds UBQLN1. Interacts with GPHN.

The protein resides in the postsynaptic cell membrane. The protein localises to the cell membrane. It catalyses the reaction chloride(in) = chloride(out). With respect to regulation, potentiated by etomidate, propofol, pregnanolone and flurazepam. Functionally, alpha subunit of the heteropentameric ligand-gated chloride channel gated by gamma-aminobutyric acid (GABA), a major inhibitory neurotransmitter in the brain. GABA-gated chloride channels, also named GABA(A) receptors (GABAAR), consist of five subunits arranged around a central pore and contain GABA active binding site(s) located at the alpha and beta subunit interface(s). When activated by GABA, GABAARs selectively allow the flow of chloride anions across the cell membrane down their electrochemical gradient. Chloride influx into the postsynaptic neuron following GABAAR opening decreases the neuron ability to generate a new action potential, thereby reducing nerve transmission. The protein is Gamma-aminobutyric acid receptor subunit alpha-3 of Homo sapiens (Human).